The primary structure comprises 130 residues: Secreted RxLR effector protein 66 (130 aa).

Positions 1-21 (MHLRLLMSTVITATLIVSNNA) are cleaved as a signal peptide. The short motif at 32 to 62 (RALRGASTVGIAADNLLAAHFSPTLKHKESR) is the RxLR-dEER element. The chain crosses the membrane as a helical span at residues 104–124 (GPAIAIFAGVAATFILIDYLI).

The protein belongs to the RxLR effector family.

It is found in the secreted. It localises to the host cytoplasm. The protein localises to the host nucleus. The protein resides in the membrane. Its function is as follows. Effector that acts as a broad suppressor of cell death to interrupt plant immunity. Inhibits cell death induced by cell death-inducing proteins, including the PAMP elicitor INF1 from P.infestans. This chain is Secreted RxLR effector protein 66, found in Plasmopara viticola (Downy mildew of grapevine).